The sequence spans 485 residues: Protein nucleotidyltransferase YdiU (485 aa).

The ATP site is built by glycine 90, glycine 92, arginine 93, lysine 113, aspartate 125, glycine 126, arginine 176, and arginine 183. Aspartate 252 acts as the Proton acceptor in catalysis. Mg(2+)-binding residues include asparagine 253 and aspartate 262. ATP is bound at residue aspartate 262.

Belongs to the SELO family. Mg(2+) serves as cofactor. The cofactor is Mn(2+).

The catalysed reaction is L-seryl-[protein] + ATP = 3-O-(5'-adenylyl)-L-seryl-[protein] + diphosphate. The enzyme catalyses L-threonyl-[protein] + ATP = 3-O-(5'-adenylyl)-L-threonyl-[protein] + diphosphate. It carries out the reaction L-tyrosyl-[protein] + ATP = O-(5'-adenylyl)-L-tyrosyl-[protein] + diphosphate. It catalyses the reaction L-histidyl-[protein] + UTP = N(tele)-(5'-uridylyl)-L-histidyl-[protein] + diphosphate. The catalysed reaction is L-seryl-[protein] + UTP = O-(5'-uridylyl)-L-seryl-[protein] + diphosphate. The enzyme catalyses L-tyrosyl-[protein] + UTP = O-(5'-uridylyl)-L-tyrosyl-[protein] + diphosphate. Its function is as follows. Nucleotidyltransferase involved in the post-translational modification of proteins. It can catalyze the addition of adenosine monophosphate (AMP) or uridine monophosphate (UMP) to a protein, resulting in modifications known as AMPylation and UMPylation. In Aliivibrio salmonicida (strain LFI1238) (Vibrio salmonicida (strain LFI1238)), this protein is Protein nucleotidyltransferase YdiU.